A 442-amino-acid polypeptide reads, in one-letter code: Cell division protein FtsZ (442 aa).

GTP is bound by residues 18 to 22 (GGGVN), 105 to 107 (GTG), glutamate 136, arginine 140, and aspartate 184. Low complexity predominate over residues 329–341 (AAPAAEPVQQQVP). The interval 329 to 442 (AAPAAEPVQQ…DDLDVPSFLQ (114 aa)) is disordered. Basic and acidic residues-rich tracts occupy residues 349 to 362 (PEKESIFGGAREEN) and 390 to 431 (NDRD…RDDR).

The protein belongs to the FtsZ family. In terms of assembly, homodimer. Polymerizes to form a dynamic ring structure in a strictly GTP-dependent manner. Interacts directly with several other division proteins.

The protein localises to the cytoplasm. In terms of biological role, essential cell division protein that forms a contractile ring structure (Z ring) at the future cell division site. The regulation of the ring assembly controls the timing and the location of cell division. One of the functions of the FtsZ ring is to recruit other cell division proteins to the septum to produce a new cell wall between the dividing cells. Binds GTP and shows GTPase activity. The protein is Cell division protein FtsZ of Corynebacterium glutamicum (strain ATCC 13032 / DSM 20300 / JCM 1318 / BCRC 11384 / CCUG 27702 / LMG 3730 / NBRC 12168 / NCIMB 10025 / NRRL B-2784 / 534).